The chain runs to 355 residues: Tyrosine recombinase XerC (355 aa).

The Core-binding (CB) domain maps to 4-89 (TQFDGDIDSF…AVRGFFAWAY (86 aa)). The tract at residues 137–181 (KDDGGAAAAPGSGKAAGKTADKSADTVNRSEAPARADKRDNARVT) is disordered. The segment covering 141 to 154 (GAAAAPGSGKAAGK) has biased composition (low complexity). The Tyr recombinase domain maps to 158-349 (KSADTVNRSE…SIEQLKNRYG (192 aa)). Positions 168-178 (APARADKRDNA) are enriched in basic and acidic residues. Catalysis depends on residues R200, K224, H301, R304, and H327. The active-site O-(3'-phospho-DNA)-tyrosine intermediate is the Y336.

The protein belongs to the 'phage' integrase family. XerC subfamily. As to quaternary structure, forms a cyclic heterotetrameric complex composed of two molecules of XerC and two molecules of XerD.

The protein resides in the cytoplasm. Functionally, site-specific tyrosine recombinase, which acts by catalyzing the cutting and rejoining of the recombining DNA molecules. The XerC-XerD complex is essential to convert dimers of the bacterial chromosome into monomers to permit their segregation at cell division. It also contributes to the segregational stability of plasmids. This is Tyrosine recombinase XerC from Bifidobacterium longum (strain DJO10A).